Here is a 395-residue protein sequence, read N- to C-terminus: Chorismate synthase (395 aa).

R40 and R46 together coordinate NADP(+). Residues 137 to 139 (RSS), G308, 323 to 327 (KPLPT), and R349 contribute to the FMN site.

It belongs to the chorismate synthase family. In terms of assembly, homotetramer. FMNH2 serves as cofactor.

The enzyme catalyses 5-O-(1-carboxyvinyl)-3-phosphoshikimate = chorismate + phosphate. It participates in metabolic intermediate biosynthesis; chorismate biosynthesis; chorismate from D-erythrose 4-phosphate and phosphoenolpyruvate: step 7/7. Functionally, catalyzes the anti-1,4-elimination of the C-3 phosphate and the C-6 proR hydrogen from 5-enolpyruvylshikimate-3-phosphate (EPSP) to yield chorismate, which is the branch point compound that serves as the starting substrate for the three terminal pathways of aromatic amino acid biosynthesis. This reaction introduces a second double bond into the aromatic ring system. This chain is Chorismate synthase, found in Gloeobacter violaceus (strain ATCC 29082 / PCC 7421).